We begin with the raw amino-acid sequence, 215 residues long: Ribonuclease T (215 aa).

The 175-residue stretch at 20 to 194 (VVIDVETAGF…YDTERTAVLF (175 aa)) folds into the Exonuclease domain. Mg(2+) is bound by residues Asp-23, Glu-25, His-181, and Asp-186. His-181 acts as the Proton donor/acceptor in catalysis.

The protein belongs to the RNase T family. As to quaternary structure, homodimer. Requires Mg(2+) as cofactor.

Its function is as follows. Trims short 3' overhangs of a variety of RNA species, leaving a one or two nucleotide 3' overhang. Responsible for the end-turnover of tRNA: specifically removes the terminal AMP residue from uncharged tRNA (tRNA-C-C-A). Also appears to be involved in tRNA biosynthesis. The sequence is that of Ribonuclease T from Shigella boydii serotype 4 (strain Sb227).